A 473-amino-acid polypeptide reads, in one-letter code: Photosystem II CP43 reaction center protein (473 aa).

Residues 1–14 constitute a propeptide that is removed on maturation; it reads MKILYSLRRFYHVE. Thr-15 is modified (N-acetylthreonine). Thr-15 is subject to Phosphothreonine. Helical transmembrane passes span 69-93, 134-155, 178-200, 255-275, and 291-312; these read LFEV…PHLA, LLGP…KDRN, KALY…RKIT, KPFA…LSYS, and WFNN…ASQA. Glu-367 contributes to the [CaMn4O5] cluster binding site. The chain crosses the membrane as a helical span at residues 447–471; it reads RARAAAAGFEKGIDRDLEPVLYMNP.

It belongs to the PsbB/PsbC family. PsbC subfamily. As to quaternary structure, PSII is composed of 1 copy each of membrane proteins PsbA, PsbB, PsbC, PsbD, PsbE, PsbF, PsbH, PsbI, PsbJ, PsbK, PsbL, PsbM, PsbT, PsbX, PsbY, PsbZ, Psb30/Ycf12, at least 3 peripheral proteins of the oxygen-evolving complex and a large number of cofactors. It forms dimeric complexes. Requires Binds multiple chlorophylls and provides some of the ligands for the Ca-4Mn-5O cluster of the oxygen-evolving complex. It may also provide a ligand for a Cl- that is required for oxygen evolution. PSII binds additional chlorophylls, carotenoids and specific lipids. as cofactor.

It localises to the plastid. The protein localises to the chloroplast thylakoid membrane. One of the components of the core complex of photosystem II (PSII). It binds chlorophyll and helps catalyze the primary light-induced photochemical processes of PSII. PSII is a light-driven water:plastoquinone oxidoreductase, using light energy to abstract electrons from H(2)O, generating O(2) and a proton gradient subsequently used for ATP formation. The sequence is that of Photosystem II CP43 reaction center protein from Lolium perenne (Perennial ryegrass).